Reading from the N-terminus, the 250-residue chain is Methionine aminopeptidase (250 aa).

His-77 is a binding site for substrate. 3 residues coordinate a divalent metal cation: Asp-95, Asp-106, and His-169. His-176 serves as a coordination point for substrate. 2 residues coordinate a divalent metal cation: Glu-202 and Glu-233.

It belongs to the peptidase M24A family. Methionine aminopeptidase type 1 subfamily. As to quaternary structure, monomer. Co(2+) serves as cofactor. Requires Zn(2+) as cofactor. It depends on Mn(2+) as a cofactor. Fe(2+) is required as a cofactor.

The catalysed reaction is Release of N-terminal amino acids, preferentially methionine, from peptides and arylamides.. Its function is as follows. Removes the N-terminal methionine from nascent proteins. The N-terminal methionine is often cleaved when the second residue in the primary sequence is small and uncharged (Met-Ala-, Cys, Gly, Pro, Ser, Thr, or Val). Requires deformylation of the N(alpha)-formylated initiator methionine before it can be hydrolyzed. This chain is Methionine aminopeptidase, found in Clostridium acetobutylicum (strain ATCC 824 / DSM 792 / JCM 1419 / IAM 19013 / LMG 5710 / NBRC 13948 / NRRL B-527 / VKM B-1787 / 2291 / W).